Here is a 738-residue protein sequence, read N- to C-terminus: Alcohol dehydrogenase (quinone), dehydrogenase subunit (738 aa).

The signal sequence occupies residues 1–35; it reads MISAVFGKRRSLSRTLTAGTICAALISGYATMASA. Glu97 contributes to the pyrroloquinoline quinone binding site. The cysteines at positions 143 and 144 are disulfide-linked. Arg149 serves as a coordination point for pyrroloquinoline quinone. Residue Glu217 participates in Ca(2+) binding. Thr278 serves as a coordination point for pyrroloquinoline quinone. The Ca(2+) site is built by Asn298 and Asp343. Catalysis depends on Asp343, which acts as the Proton acceptor. Lys370 and Ile584 together coordinate pyrroloquinoline quinone. One can recognise a Cytochrome c domain in the interval 634-738; that stretch reads FDSKRTDNGY…NADGIPEQLP (105 aa). The heme c site is built by Cys650, Cys653, His654, and Met693.

The protein belongs to the bacterial PQQ dehydrogenase family. In terms of assembly, the alcohol dehydrogenase multicomponent enzyme system is composed of a dehydrogenase subunit I (AdhA) and a cytochrome c subunit II (AdhB). It depends on pyrroloquinoline quinone as a cofactor. Requires Ca(2+) as cofactor. Heme c serves as cofactor.

It is found in the cell membrane. The enzyme catalyses ethanol + a ubiquinone = a ubiquinol + acetaldehyde. Dehydrogenase component of the alcohol dehydrogenase multicomponent enzyme system which is involved in the production of acetic acid and in the ethanol oxidase respiratory chain. Quinohemoprotein alcohol dehydrogenase (ADH) catalyzes the oxidation of ethanol to acetaldehyde by transferring electrons to the ubiquinone embedded in the membrane phospholipids. The electrons transfer from ethanol to membranous ubiquinone occurs from pyrroloquinoline quinone (PQQ) to one heme c in subunit I (AdhA), and finally to two heme c in subunit II (AdhB). Besides ubiquinone reduction, ADH also has a ubiquinol (QH2) oxidation reaction which mediates electron transfer from ubiquinol to the non-energy generating bypass oxidase system. The electrons transfer occurs from ubiquinol (QH2) to the additional heme c within subunit II (AdhB). The sequence is that of Alcohol dehydrogenase (quinone), dehydrogenase subunit (adhA) from Gluconacetobacter polyoxogenes (Acetobacter polyoxogenes).